A 163-amino-acid polypeptide reads, in one-letter code: Methyl-CpG-binding domain-containing protein 3 (163 aa).

The CW-type zinc-finger motif lies at 6-56 (TTLIDSYAAQCWKCLKVRSIESQEDYEEIRSKTLEKFFECKRCEEPGDMVM). The MBD domain occupies 65 to 137 (WFQDEHSIPK…EEVSFAAPKR (73 aa)). The disordered stretch occupies residues 140–163 (LKKKPVDSHSSSRNTEEDGVSRDA). Residues 153–163 (NTEEDGVSRDA) are compositionally biased toward basic and acidic residues.

The protein resides in the nucleus. Probable transcriptional regulator. The sequence is that of Methyl-CpG-binding domain-containing protein 3 (MBD3) from Arabidopsis thaliana (Mouse-ear cress).